A 315-amino-acid polypeptide reads, in one-letter code: Acetyl-coenzyme A carboxylase carboxyl transferase subunit beta, chloroplastic (315 aa).

Residues 47-315 (LWTRCDSCEN…VYKESNSYLF (269 aa)) form the CoA carboxyltransferase N-terminal domain. Positions 51, 54, 70, and 73 each coordinate Zn(2+). A C4-type zinc finger spans residues 51-73 (CDSCENMLYVRFLKQNKRICEEC).

The protein belongs to the AccD/PCCB family. As to quaternary structure, acetyl-CoA carboxylase is a heterohexamer composed of biotin carboxyl carrier protein, biotin carboxylase and 2 subunits each of ACCase subunit alpha and ACCase plastid-coded subunit beta (accD). Requires Zn(2+) as cofactor.

Its subcellular location is the plastid. The protein resides in the chloroplast stroma. The enzyme catalyses N(6)-carboxybiotinyl-L-lysyl-[protein] + acetyl-CoA = N(6)-biotinyl-L-lysyl-[protein] + malonyl-CoA. Its pathway is lipid metabolism; malonyl-CoA biosynthesis; malonyl-CoA from acetyl-CoA: step 1/1. Its function is as follows. Component of the acetyl coenzyme A carboxylase (ACC) complex. Biotin carboxylase (BC) catalyzes the carboxylation of biotin on its carrier protein (BCCP) and then the CO(2) group is transferred by the transcarboxylase to acetyl-CoA to form malonyl-CoA. In Physcomitrium patens (Spreading-leaved earth moss), this protein is Acetyl-coenzyme A carboxylase carboxyl transferase subunit beta, chloroplastic.